Reading from the N-terminus, the 715-residue chain is MYSHPHNAGVAAAPQKPETFMLSTEAQQALPHDAQVALQQVDNLKYFLISAPVDWQPDQYIRRFLLPTGEYVSCVLWNNLFHISGTDIVRCLSFRFQAFGRPVKNSKKFEEGIFSDLRNLKSGTDASLEEPKSPFLDFLYKNNCIRTQKKQKVFYWYSVPHDRLFLDALERDLKREKMGQEATTMAVSEPALSFQYDSSQSLYEQLTKAQQANSSSFNAQQVSFPPSQSTSPVMRAMDSMPPPPQMMPQPMPQSMAPLADGLDAMVPYAAMGMAPGMPPQPAVKREPDFNRVQYNQNGVPINQGHQRHASMPAYGLEYSPAPSFVSSHYDDYGNRGISFEPLTPPQQAMGMGAEPAYIANEETGLYTAIPDHMNGVNGLNGMIQLPPSNLAGPQFTRSYGSNNVYSVIEGSPTYKQRRRRSSIPPGMSAIAAATAAATAAHRPSDLRRSVSASVGPVAEGDESLDNSPPGLIYSNQPMSMANHQREAMEQMSRHGTPLSTVEGSPGMHNVNLEQQQYPMPSEDMTSPMDDRSRPMAQGGPSVVRRARSATVMGSEVGPYPQKSHSCPIPTCGRLFKRLEHLKRHVRTHTQERPYICPYCSKAFSRSDNLAQHKRTHDRADGGEGLILSGEDEEEYSGDDHLGSLEEASPTSEGGYVTSSLNSAMAHSNTSQHPGSNAVSPNPGPMSHAPTYNSMQTLMQPMQMSQPQPINAGGMM.

The segment covering 214–224 has biased composition (low complexity); the sequence is SSSFNAQQVSF. Disordered regions lie at residues 214-243, 439-469, and 518-539; these read SSSF…MPPP, AAHR…NSPP, and PMPS…AQGG. 2 consecutive C2H2-type zinc fingers follow at residues 564–588 and 594–616; these read HSCP…VRTH and YICP…KRTH. A disordered region spans residues 632-691; sequence EEEYSGDDHLGSLEEASPTSEGGYVTSSLNSAMAHSNTSQHPGSNAVSPNPGPMSHAPTY. Residues 648–679 show a composition bias toward polar residues; that stretch reads SPTSEGGYVTSSLNSAMAHSNTSQHPGSNAVS.

This sequence belongs to the STE12 transcription factor family.

The protein resides in the nucleus. In terms of biological role, transcription factor that may function downstream of PMK1 to regulate genes involved in infectious hyphae growth. Is not essential for vegetative growth, conidiation or appressorium formation. May be involved in the regulation of the expression of the cell surface sensor MSB2. This chain is Transcription factor MST12, found in Pyricularia oryzae (strain 70-15 / ATCC MYA-4617 / FGSC 8958) (Rice blast fungus).